The sequence spans 369 residues: Putative protein FAM10A5 (369 aa).

The segment at Met38–Glu98 is disordered. Residues Ala49–Glu73 are compositionally biased toward basic and acidic residues. Residues Ile89 to Glu98 show a composition bias toward acidic residues. TPR repeat units follow at residues Ala114 to Leu147, Ile149 to Ser181, and Gln183 to Glu215. Over residues Lys256 to Arg272 the composition is skewed to basic and acidic residues. The disordered stretch occupies residues Lys256–Met300. Positions Phe281–Met300 are enriched in gly residues. The STI1 domain occupies Asp319 to Ile358. Ser346 is modified (phosphoserine). Lys353 and Lys360 each carry N6-acetyllysine.

The protein belongs to the FAM10 family.

The protein resides in the cytoplasm. The protein is Putative protein FAM10A5 (ST13P5) of Homo sapiens (Human).